The primary structure comprises 342 residues: Protein FDO1 (342 aa).

Disordered stretches follow at residues 1 to 36 (MEEN…NGSD), 57 to 76 (MSPM…TLSV), and 299 to 322 (GRTI…GNRT). Residues 15-25 (ATWSNQMGSPE) show a composition bias toward polar residues. Basic and acidic residues predominate over residues 308–319 (NTKDESIQDSHG).

Interacts with FKH1.

Functionally, in concert with FKH1, plays a role in directionality of mating type switching by controlling which donor mating-type locus is inserted into MAT locus during mating type switching. In Saccharomyces cerevisiae (strain ATCC 204508 / S288c) (Baker's yeast), this protein is Protein FDO1.